A 476-amino-acid chain; its full sequence is Arginine biosynthesis bifunctional protein ArgJ, mitochondrial (476 aa).

Substrate is bound by residues Thr193, Lys219, Thr237, Glu337, Asn471, and Ser476. Thr237 functions as the Nucleophile in the catalytic mechanism.

The protein belongs to the ArgJ family. Heterodimer of an alpha and a beta chain. In terms of processing, the alpha and beta chains are autoproteolytically processed from a single precursor protein within the mitochondrion.

The protein localises to the mitochondrion matrix. It carries out the reaction N(2)-acetyl-L-ornithine + L-glutamate = N-acetyl-L-glutamate + L-ornithine. The catalysed reaction is L-glutamate + acetyl-CoA = N-acetyl-L-glutamate + CoA + H(+). Its pathway is amino-acid biosynthesis; L-arginine biosynthesis; L-ornithine and N-acetyl-L-glutamate from L-glutamate and N(2)-acetyl-L-ornithine (cyclic): step 1/1. The protein operates within amino-acid biosynthesis; L-arginine biosynthesis; N(2)-acetyl-L-ornithine from L-glutamate: step 1/4. Its function is as follows. Catalyzes two activities which are involved in the cyclic version of arginine biosynthesis: the synthesis of acetylglutamate from glutamate and acetyl-CoA, and of ornithine by transacetylation between acetylornithine and glutamate. The sequence is that of Arginine biosynthesis bifunctional protein ArgJ, mitochondrial from Cryptococcus neoformans var. neoformans serotype D (strain JEC21 / ATCC MYA-565) (Filobasidiella neoformans).